A 239-amino-acid polypeptide reads, in one-letter code: DNA damage-regulated autophagy modulator protein 1 (239 aa).

A run of 6 helical transmembrane segments spans residues 15 to 35, 54 to 74, 91 to 111, 119 to 139, 162 to 182, and 201 to 221; these read ILVIWSSAGFLFSYIISVLIG, SGVFGFMISVSAMLGAATMYT, IYFNKISLAIGLFGCIGMGIV, VPAVHDAGALITFICGVMYIL, MTVSLIAFIAVVPMSVFSILS, and TSAICEWTVAFGFNMYFLTFI.

This sequence belongs to the DRAM/TMEM150 family.

It is found in the lysosome membrane. Lysosomal modulator of autophagy that plays a central role in p53/TP53-mediated apoptosis. In Xenopus laevis (African clawed frog), this protein is DNA damage-regulated autophagy modulator protein 1 (dram1).